An 831-amino-acid chain; its full sequence is MTDNQEIKPKKLTLGNSKLLLNKSFDSLTGAQSFVNAKSKTLVEVRKSSIGSTTTISLNKERNSLDQSVIDSNKEEFNRRLSILKKAAEQSKLHDPAQISTLSKLASINQSINSKNEQSITDKAVEQKHQNIEDNKVEIAAKIVQDNENISSQIPKKKKETLAKSVLVGMRTRYGIEEEPALEKTVDNKVVVPKIKLEESKKFKKADLFNMLSDDENGSGRTRSLASIKRAREKEKRKLVSQVPEKVYREVTIPEVIGVGDLANAMSERVADVIKELMKLGILANASQTIDADTAELVATNLGHTVTRVQESDVENILINDDKVEDLRTRAPVVTVMGHVDHGKTSLLDALKSTDIAAGELGGITQHIGAYRVTLADSKAITFIDTPGHEAFSEMRSRGAKVTDIVIIVVAADDGIKTQTVEAINHAKAAGVPIIVAINKIDKPDIDIERIKNELYVHEIIGEEAGGDVIFIPISALKKINLDKLEEAILLISEMQDLKASPFGLASGVVIESKIEKGRGTLTTILVQRGTLRNGDIIIAGTSYGKVKKMINDKGREILEATPSVPVEIQGLNEVPFAGDQFNVVQNEKQAKDIAEYRIRLAKEKKISVASRSSLEELLLKASGNSKIKELPLIIKCDVQGSIEAISGSLLKLPSDEIKLRILHSGVGPITESDVSLAHVSSAIVVGFNVRAWANALTAAEKTKVDIRYYSIIYNLIDDVKAIMSGMLEPIVREQYIGSVEIRQIFNITKIGKIAGSYVTKGIIKKGAGVRLLRDNVVIHAGKLKTLKRFKDEVKEVREGYECGIAFENYEDIREGDTVEVFELVQEQRQL.

One can recognise a tr-type G domain in the interval 329–499 (TRAPVVTVMG…LLISEMQDLK (171 aa)). The interval 338–345 (GHVDHGKT) is G1. 338–345 (GHVDHGKT) is a GTP binding site. Residues 363-367 (GITQH) form a G2 region. The G3 stretch occupies residues 385 to 388 (DTPG). Residues 385–389 (DTPGH) and 439–442 (NKID) each bind GTP. The tract at residues 439-442 (NKID) is G4. A G5 region spans residues 475 to 477 (SAL).

The protein belongs to the TRAFAC class translation factor GTPase superfamily. Classic translation factor GTPase family. IF-2 subfamily.

The protein localises to the cytoplasm. Functionally, one of the essential components for the initiation of protein synthesis. Protects formylmethionyl-tRNA from spontaneous hydrolysis and promotes its binding to the 30S ribosomal subunits. Also involved in the hydrolysis of GTP during the formation of the 70S ribosomal complex. The polypeptide is Translation initiation factor IF-2 (infB) (Rickettsia prowazekii (strain Madrid E)).